The primary structure comprises 218 residues: Small ribosomal subunit protein uS7 (218 aa).

Belongs to the universal ribosomal protein uS7 family. In terms of assembly, part of the 30S ribosomal subunit.

Functionally, one of the primary rRNA binding proteins, it binds directly to 16S rRNA where it nucleates assembly of the head domain of the 30S subunit. Is located at the subunit interface close to the decoding center. The chain is Small ribosomal subunit protein uS7 (rps7) from Pyrococcus horikoshii (strain ATCC 700860 / DSM 12428 / JCM 9974 / NBRC 100139 / OT-3).